A 440-amino-acid chain; its full sequence is Transposon Ty1-PR2 Gag polyprotein (440 aa).

3 stretches are compositionally biased toward polar residues: residues 1 to 10, 48 to 60, and 127 to 152; these read MESQQLSNYP, TKAN…TPAS, and QSQF…GNTF. Disordered stretches follow at residues 1–93, 126–173, and 352–440; these read MESQ…MMTQ, PQSQ…RPPP, and GSRN…PETY. Residues 153 to 165 show a composition bias toward low complexity; that stretch reads TDSSSADSDMTST. Residues 299-401 are RNA-binding; the sequence is NNGIHINNKV…NSKSKTARAH (103 aa). Residues 402-418 are compositionally biased toward low complexity; sequence NVSTSNNSPSTDNDSIS. The residue at position 416 (Ser-416) is a Phosphoserine. Over residues 419-428 the composition is skewed to polar residues; the sequence is KSTTEPIQLN. A compositionally biased stretch (basic and acidic residues) spans 429-440; the sequence is NKHDLHLRPETY.

As to quaternary structure, homotrimer.

The protein resides in the cytoplasm. In terms of biological role, capsid protein (CA) is the structural component of the virus-like particle (VLP), forming the shell that encapsulates the retrotransposons dimeric RNA genome. The particles are assembled from trimer-clustered units and there are holes in the capsid shells that allow for the diffusion of macromolecules. CA also has nucleocapsid-like chaperone activity, promoting primer tRNA(i)-Met annealing to the multipartite primer-binding site (PBS), dimerization of Ty1 RNA and initiation of reverse transcription. This chain is Transposon Ty1-PR2 Gag polyprotein (TY1A-PR2), found in Saccharomyces cerevisiae (strain ATCC 204508 / S288c) (Baker's yeast).